Here is a 248-residue protein sequence, read N- to C-terminus: Prepilin leader peptidase/N-methyltransferase (248 aa).

Residues 1-21 (MLSILFIFGLILGSFYYTAGC) form a helical membrane-spanning segment. Residues C36, C39, C61, and C64 each contribute to the Zn(2+) site. 6 helical membrane-spanning segments follow: residues 68–88 (ISFM…AAGI), 90–110 (FGIS…IIVA), 114–134 (IHFM…LAAA), 143–163 (WYAG…IAAI), 178–198 (VIGF…SVLI), and 223–243 (AIAA…SFYI).

It belongs to the peptidase A24 family. Zn(2+) serves as cofactor.

Its subcellular location is the cell membrane. The enzyme catalyses Typically cleaves a -Gly-|-Phe- bond to release an N-terminal, basic peptide of 5-8 residues from type IV prepilin, and then N-methylates the new N-terminal amino group, the methyl donor being S-adenosyl-L-methionine.. Functionally, plays a role in type II pseudopili formation by proteolytically removing the leader sequence from substrate proteins and subsequently monomethylating the alpha-amino group of the newly exposed N-terminal phenylalanine. Substrates include proteins required for biogenesis of the type II general secretory apparatus. This is Prepilin leader peptidase/N-methyltransferase (comC) from Bacillus subtilis (strain 168).